The primary structure comprises 573 residues: Urease subunit alpha 2 (573 aa).

One can recognise a Urease domain in the interval 135–573; it reads GGMDTHVHYI…ISLNQLYFFS (439 aa). Ni(2+)-binding residues include His-140, His-142, and Lys-223. Lys-223 is subject to N6-carboxylysine. His-225 contacts substrate. Ni(2+) is bound by residues His-252 and His-278. His-326 serves as the catalytic Proton donor. Position 366 (Asp-366) interacts with Ni(2+).

The protein belongs to the metallo-dependent hydrolases superfamily. Urease alpha subunit family. Heterotrimer of UreA (gamma), UreB (beta) and UreC (alpha) subunits. Three heterotrimers associate to form the active enzyme. Requires Ni cation as cofactor. Carboxylation allows a single lysine to coordinate two nickel ions.

Its subcellular location is the cytoplasm. It carries out the reaction urea + 2 H2O + H(+) = hydrogencarbonate + 2 NH4(+). It functions in the pathway nitrogen metabolism; urea degradation; CO(2) and NH(3) from urea (urease route): step 1/1. Disrupting the ure2 operon has no effect on urease activity or pathogen survival in BALB/c mice when administered orally. This Brucella abortus (strain 2308) protein is Urease subunit alpha 2.